The chain runs to 75 residues: UPF0352 protein ASA_2693 (75 aa).

The protein belongs to the UPF0352 family.

This chain is UPF0352 protein ASA_2693, found in Aeromonas salmonicida (strain A449).